The sequence spans 196 residues: MSDSLNAAALDQLFRTARTQNAFADTPVSQEVLRELYELVKWGSTAANSGPARFVFVTSADGKAKLKPALSEGNAAKTLAAPVTVIVAHDEDFHEKLPYLFPHADAKSWFDGPREGRAESAFRNGSLQGAYLILAARALGLDAGPMSGFDNAKVDAAFFAGTPIKSNFLVNLGYGDPAGLFPRSPRLSFDEAARFE.

Belongs to the nitroreductase family. HadB/RutE subfamily. FMN is required as a cofactor.

The protein is Putative NADH dehydrogenase/NAD(P)H nitroreductase PXO_03909 of Xanthomonas oryzae pv. oryzae (strain PXO99A).